The following is a 476-amino-acid chain: Eukaryotic translation initiation factor 3 subunit L (476 aa).

In terms of domain architecture, PCI spans 257-452 (DAIRMFSHIL…DLDYALEKDL (196 aa)).

This sequence belongs to the eIF-3 subunit L family. Component of the eukaryotic translation initiation factor 3 (eIF-3) complex.

Its subcellular location is the cytoplasm. Its function is as follows. Component of the eukaryotic translation initiation factor 3 (eIF-3) complex, which is involved in protein synthesis of a specialized repertoire of mRNAs and, together with other initiation factors, stimulates binding of mRNA and methionyl-tRNAi to the 40S ribosome. The eIF-3 complex specifically targets and initiates translation of a subset of mRNAs involved in cell proliferation. In Emericella nidulans (strain FGSC A4 / ATCC 38163 / CBS 112.46 / NRRL 194 / M139) (Aspergillus nidulans), this protein is Eukaryotic translation initiation factor 3 subunit L.